Here is an 88-residue protein sequence, read N- to C-terminus: Small ribosomal subunit protein uS17 (88 aa).

This sequence belongs to the universal ribosomal protein uS17 family. As to quaternary structure, part of the 30S ribosomal subunit.

One of the primary rRNA binding proteins, it binds specifically to the 5'-end of 16S ribosomal RNA. The polypeptide is Small ribosomal subunit protein uS17 (Lactobacillus gasseri (strain ATCC 33323 / DSM 20243 / BCRC 14619 / CIP 102991 / JCM 1131 / KCTC 3163 / NCIMB 11718 / NCTC 13722 / AM63)).